Reading from the N-terminus, the 308-residue chain is CD276 antigen homolog (308 aa).

A signal peptide spans 1–15 (MAALCLLLLLSLAEA). At 16–236 (IDLRVPELPV…VTGQHLSFPP (221 aa)) the chain is on the extracellular side. An Ig-like V-type domain is found at 21–125 (PELPVIGLLD…VQNSSSASVS (105 aa)). 2 disulfides stabilise this stretch: cysteine 37/cysteine 112 and cysteine 155/cysteine 210. One can recognise an Ig-like C2-type domain in the interval 135–228 (PTLHLEPSEA…DVTHASLTVT (94 aa)). A helical membrane pass occupies residues 237–257 (LVLWVTVGLSICLLCLLVALA). Topologically, residues 258–308 (CVCRKHLKQTCEEEQENAGNEEHEENGELKTAMQPLKVTSPGEDDDAECLE) are cytoplasmic. The tract at residues 270-308 (EEQENAGNEEHEENGELKTAMQPLKVTSPGEDDDAECLE) is disordered. A compositionally biased stretch (acidic residues) spans 299–308 (GEDDDAECLE).

Belongs to the immunoglobulin superfamily. BTN/MOG family.

It is found in the membrane. Functionally, modulates immune responses. The chain is CD276 antigen homolog (cd276) from Xenopus laevis (African clawed frog).